Here is a 512-residue protein sequence, read N- to C-terminus: Lysine--tRNA ligase (512 aa).

Positions 408 and 415 each coordinate Mg(2+).

It belongs to the class-II aminoacyl-tRNA synthetase family. In terms of assembly, homodimer. Mg(2+) is required as a cofactor.

The protein resides in the cytoplasm. The enzyme catalyses tRNA(Lys) + L-lysine + ATP = L-lysyl-tRNA(Lys) + AMP + diphosphate. The polypeptide is Lysine--tRNA ligase (Prochlorococcus marinus (strain MIT 9301)).